Reading from the N-terminus, the 472-residue chain is 3-isopropylmalate dehydratase large subunit (472 aa).

[4Fe-4S] cluster contacts are provided by Cys-349, Cys-409, and Cys-412.

This sequence belongs to the aconitase/IPM isomerase family. LeuC type 1 subfamily. Heterodimer of LeuC and LeuD. [4Fe-4S] cluster is required as a cofactor.

It catalyses the reaction (2R,3S)-3-isopropylmalate = (2S)-2-isopropylmalate. Its pathway is amino-acid biosynthesis; L-leucine biosynthesis; L-leucine from 3-methyl-2-oxobutanoate: step 2/4. Its function is as follows. Catalyzes the isomerization between 2-isopropylmalate and 3-isopropylmalate, via the formation of 2-isopropylmaleate. The chain is 3-isopropylmalate dehydratase large subunit from Rhodospirillum rubrum (strain ATCC 11170 / ATH 1.1.1 / DSM 467 / LMG 4362 / NCIMB 8255 / S1).